The chain runs to 267 residues: Hydroxyethylthiazole kinase (267 aa).

Position 42 (methionine 42) interacts with substrate. The ATP site is built by arginine 118 and serine 164. Alanine 191 is a substrate binding site.

Belongs to the Thz kinase family. Mg(2+) is required as a cofactor.

The enzyme catalyses 5-(2-hydroxyethyl)-4-methylthiazole + ATP = 4-methyl-5-(2-phosphooxyethyl)-thiazole + ADP + H(+). Its pathway is cofactor biosynthesis; thiamine diphosphate biosynthesis; 4-methyl-5-(2-phosphoethyl)-thiazole from 5-(2-hydroxyethyl)-4-methylthiazole: step 1/1. In terms of biological role, catalyzes the phosphorylation of the hydroxyl group of 4-methyl-5-beta-hydroxyethylthiazole (THZ). The chain is Hydroxyethylthiazole kinase from Pasteurella multocida (strain Pm70).